We begin with the raw amino-acid sequence, 61 residues long: Large ribosomal subunit protein bL28 (61 aa).

The protein belongs to the bacterial ribosomal protein bL28 family.

The chain is Large ribosomal subunit protein bL28 from Lactobacillus johnsonii (strain CNCM I-12250 / La1 / NCC 533).